The chain runs to 596 residues: Elongation factor 4 (596 aa).

The tr-type G domain maps to Lys2–Asp183. Residues Asp14 to Thr19 and Asn130 to Asp133 each bind GTP.

It belongs to the TRAFAC class translation factor GTPase superfamily. Classic translation factor GTPase family. LepA subfamily.

It localises to the cell inner membrane. It carries out the reaction GTP + H2O = GDP + phosphate + H(+). Functionally, required for accurate and efficient protein synthesis under certain stress conditions. May act as a fidelity factor of the translation reaction, by catalyzing a one-codon backward translocation of tRNAs on improperly translocated ribosomes. Back-translocation proceeds from a post-translocation (POST) complex to a pre-translocation (PRE) complex, thus giving elongation factor G a second chance to translocate the tRNAs correctly. Binds to ribosomes in a GTP-dependent manner. The chain is Elongation factor 4 from Campylobacter curvus (strain 525.92).